The chain runs to 287 residues: Ribonuclease Z (287 aa).

Histidine 64, histidine 66, aspartate 68, histidine 69, histidine 124, aspartate 191, and histidine 250 together coordinate Zn(2+). The active-site Proton acceptor is the aspartate 68.

Belongs to the RNase Z family. In terms of assembly, homodimer. Requires Zn(2+) as cofactor.

The catalysed reaction is Endonucleolytic cleavage of RNA, removing extra 3' nucleotides from tRNA precursor, generating 3' termini of tRNAs. A 3'-hydroxy group is left at the tRNA terminus and a 5'-phosphoryl group is left at the trailer molecule.. Its function is as follows. Zinc phosphodiesterase, which displays some tRNA 3'-processing endonuclease activity. Probably involved in tRNA maturation, by removing a 3'-trailer from precursor tRNA. This is Ribonuclease Z from Pyrobaculum aerophilum (strain ATCC 51768 / DSM 7523 / JCM 9630 / CIP 104966 / NBRC 100827 / IM2).